A 311-amino-acid polypeptide reads, in one-letter code: Homoserine kinase (311 aa).

88–98 contacts ATP; the sequence is PEGLGLGSSGA.

It belongs to the GHMP kinase family. Homoserine kinase subfamily.

It is found in the cytoplasm. It catalyses the reaction L-homoserine + ATP = O-phospho-L-homoserine + ADP + H(+). The protein operates within amino-acid biosynthesis; L-threonine biosynthesis; L-threonine from L-aspartate: step 4/5. Catalyzes the ATP-dependent phosphorylation of L-homoserine to L-homoserine phosphate. This is Homoserine kinase from Saccharolobus islandicus (strain L.S.2.15 / Lassen #1) (Sulfolobus islandicus).